The primary structure comprises 178 residues: Large ribosomal subunit protein bL25 (178 aa).

Belongs to the bacterial ribosomal protein bL25 family. CTC subfamily. In terms of assembly, part of the 50S ribosomal subunit; part of the 5S rRNA/L5/L18/L25 subcomplex. Contacts the 5S rRNA. Binds to the 5S rRNA independently of L5 and L18.

Its function is as follows. This is one of the proteins that binds to the 5S RNA in the ribosome where it forms part of the central protuberance. The polypeptide is Large ribosomal subunit protein bL25 (Campylobacter lari (strain RM2100 / D67 / ATCC BAA-1060)).